The chain runs to 65 residues: Large ribosomal subunit protein uL30 (65 aa).

Belongs to the universal ribosomal protein uL30 family. In terms of assembly, part of the 50S ribosomal subunit.

The polypeptide is Large ribosomal subunit protein uL30 (Mycobacterium bovis (strain ATCC BAA-935 / AF2122/97)).